The following is a 220-amino-acid chain: MKIDILDKGFVELVDVMGNDLSAVRAARVSFDMGLKDEERDRHLIEYLMRYGHETPFEHIVFTFHVKAPIFVARQWFRHRIASYNELSGRYSKLSYEFYIPSPERLEGYKTTIPPEQVTEKISEIVDKAYRTYLELIESGVPREVARIVLPLNLYTRFFWTVNARSLMNFLNLRADSHAQWEIQQYALAIARIFKEKCPWTFEAFLKYAYKGDILKEVQV.

Residues 1 to 208 enclose the ThyX domain; sequence MKIDILDKGF…PWTFEAFLKY (208 aa). Residues T55, 78-80, and E86 contribute to the FAD site; that span reads RHR. DUMP is bound by residues 75–78, 86–90, and R147; these read QWFR and ELSGR. The ThyX motif signature appears at 78 to 88; sequence RHRIASYNELS. FAD contacts are provided by residues 163–165 and N169; that span reads NAR. DUMP is bound at residue R174. R174 acts as the Involved in ionization of N3 of dUMP, leading to its activation in catalysis.

This sequence belongs to the thymidylate synthase ThyX family. Homotetramer. It depends on FAD as a cofactor.

The enzyme catalyses dUMP + (6R)-5,10-methylene-5,6,7,8-tetrahydrofolate + NADPH + H(+) = dTMP + (6S)-5,6,7,8-tetrahydrofolate + NADP(+). It functions in the pathway pyrimidine metabolism; dTTP biosynthesis. Functionally, catalyzes the reductive methylation of 2'-deoxyuridine-5'-monophosphate (dUMP) to 2'-deoxythymidine-5'-monophosphate (dTMP) while utilizing 5,10-methylenetetrahydrofolate (mTHF) as the methyl donor, and NADPH and FADH(2) as the reductant. This is Flavin-dependent thymidylate synthase from Thermotoga sp. (strain RQ2).